The chain runs to 66 residues: Sodium channel neurotoxin MeuNaTxalpha-7 (66 aa).

Residues 2–64 enclose the LCN-type CS-alpha/beta domain; that stretch reads RDGYIADDKN…VPIKVSGKCN (63 aa). 4 disulfide bridges follow: C12–C63, C16–C36, C22–C46, and C26–C48. N64 carries the asparagine amide modification.

The protein belongs to the long (4 C-C) scorpion toxin superfamily. Sodium channel inhibitor family. Alpha subfamily. Expressed by the venom gland.

The protein resides in the secreted. Its function is as follows. Alpha toxins bind voltage-independently at site-3 of sodium channels (Nav) and inhibit the inactivation of the activated channels, thereby blocking neuronal transmission. This chain is Sodium channel neurotoxin MeuNaTxalpha-7, found in Mesobuthus eupeus (Lesser Asian scorpion).